The sequence spans 223 residues: Kinetochore protein Spc25 (223 aa).

The stretch at 65–115 (LRCGELEKRANFMEELTQELEATKQRNLVMRDQIKQLNVLARQHRNEVMES) forms a coiled coil.

The protein belongs to the SPC25 family. As to quaternary structure, component of the Ndc80 complex, which is composed of Ndc80, Nuf2 and Spc25.

Its subcellular location is the nucleus. It localises to the chromosome. The protein localises to the centromere. The protein resides in the kinetochore. Its function is as follows. Acts as a component of the essential kinetochore-associated Ndc80 complex, which is required for chromosome segregation and spindle checkpoint activity during meiosis and mitosis. Required for kinetochore integrity and the organization of stable microtubule binding sites in the outer plate of the kinetochore. Participates in SAC signaling that responds specifically to disruptions in spindle microtubule dynamics. The NDC80 complex synergistically enhances the affinity of the SKA1 complex for microtubules and may allow the NDC80 complex to track depolymerizing microtubules. This Drosophila lutescens (Fruit fly) protein is Kinetochore protein Spc25.